The chain runs to 456 residues: NADH-quinone oxidoreductase subunit N (456 aa).

The next 14 membrane-spanning stretches (helical) occupy residues 6–26, 45–65, 75–95, 97–117, 118–138, 151–171, 181–201, 220–240, 252–272, 281–301, 308–328, 355–375, 382–402, and 426–446; these read LFAL…MLLA, VAAL…GALF, TAYA…AGVA, EAPA…GAGH, AATL…LFAF, FLVM…LIYA, WVGH…GLAF, PAGA…IAIL, LWSA…NVLA, MLGY…ASGA, VLFY…ASAM, GLLS…LYLF, ESWI…YYYI, and LLLI…LVLI.

This sequence belongs to the complex I subunit 2 family. As to quaternary structure, NDH-1 is composed of 14 different subunits. Subunits NuoA, H, J, K, L, M, N constitute the membrane sector of the complex.

Its subcellular location is the cell inner membrane. It catalyses the reaction a quinone + NADH + 5 H(+)(in) = a quinol + NAD(+) + 4 H(+)(out). NDH-1 shuttles electrons from NADH, via FMN and iron-sulfur (Fe-S) centers, to quinones in the respiratory chain. The immediate electron acceptor for the enzyme in this species is believed to be ubiquinone. Couples the redox reaction to proton translocation (for every two electrons transferred, four hydrogen ions are translocated across the cytoplasmic membrane), and thus conserves the redox energy in a proton gradient. The sequence is that of NADH-quinone oxidoreductase subunit N from Rhodopseudomonas palustris (strain BisA53).